Reading from the N-terminus, the 452-residue chain is GTPase Der (452 aa).

EngA-type G domains lie at 4 to 169 (PVVA…PPAA) and 177 to 352 (IKVA…ESHR). Residues 10–17 (GRPNVGKS), 57–61 (DTGGL), 120–123 (NKCE), 183–190 (GRPNVGKS), 230–234 (DTAGI), and 295–298 (NKWD) each bind GTP. The region spanning 353-438 (RRVSTSVIND…PIRLIWRGKP (86 aa)) is the KH-like domain.

Belongs to the TRAFAC class TrmE-Era-EngA-EngB-Septin-like GTPase superfamily. EngA (Der) GTPase family. As to quaternary structure, associates with the 50S ribosomal subunit.

Its function is as follows. GTPase that plays an essential role in the late steps of ribosome biogenesis. The polypeptide is GTPase Der (Microcystis aeruginosa (strain NIES-843 / IAM M-2473)).